Reading from the N-terminus, the 405-residue chain is Obg-like ATPase homolog (405 aa).

One can recognise an OBG-type G domain in the interval 17-283; sequence PTSGIVGLAN…CKGIASEYFD (267 aa). ATP contacts are provided by residues 26–31 and Val231; that span reads NVGKST. The region spanning 312 to 398 is the TGS domain; it reads NLISFFTCGP…QDNDIALFKA (87 aa).

This sequence belongs to the TRAFAC class OBG-HflX-like GTPase superfamily. OBG GTPase family.

The protein localises to the mitochondrion. Its function is as follows. Hydrolyzes ATP, and can also hydrolyze GTP with lower efficiency. Has lower affinity for GTP. This chain is Obg-like ATPase homolog (YLF2), found in Saccharomyces cerevisiae (strain ATCC 204508 / S288c) (Baker's yeast).